The chain runs to 238 residues: Ribonuclease PH (238 aa).

Phosphate-binding positions include R86 and 124 to 126 (GTR).

The protein belongs to the RNase PH family. In terms of assembly, homohexameric ring arranged as a trimer of dimers.

It carries out the reaction tRNA(n+1) + phosphate = tRNA(n) + a ribonucleoside 5'-diphosphate. Functionally, phosphorolytic 3'-5' exoribonuclease that plays an important role in tRNA 3'-end maturation. Removes nucleotide residues following the 3'-CCA terminus of tRNAs; can also add nucleotides to the ends of RNA molecules by using nucleoside diphosphates as substrates, but this may not be physiologically important. Probably plays a role in initiation of 16S rRNA degradation (leading to ribosome degradation) during starvation. The polypeptide is Ribonuclease PH (Aliivibrio fischeri (strain ATCC 700601 / ES114) (Vibrio fischeri)).